Here is a 263-residue protein sequence, read N- to C-terminus: Endonuclease 8 (263 aa).

Pro-2 acts as the Schiff-base intermediate with DNA in catalysis. Glu-3 acts as the Proton donor in catalysis. Lys-53 serves as the catalytic Proton donor; for beta-elimination activity. 3 residues coordinate DNA: Gln-70, Arg-125, and Asn-169. The segment at 229–263 (KVFHRDGEPCERCGGIIEKTTLSSRPFYWCPGCQH) adopts an FPG-type zinc-finger fold. The active-site Proton donor; for delta-elimination activity is the Arg-253.

This sequence belongs to the FPG family. It depends on Zn(2+) as a cofactor.

The enzyme catalyses 2'-deoxyribonucleotide-(2'-deoxyribose 5'-phosphate)-2'-deoxyribonucleotide-DNA = a 3'-end 2'-deoxyribonucleotide-(2,3-dehydro-2,3-deoxyribose 5'-phosphate)-DNA + a 5'-end 5'-phospho-2'-deoxyribonucleoside-DNA + H(+). Involved in base excision repair of DNA damaged by oxidation or by mutagenic agents. Acts as a DNA glycosylase that recognizes and removes damaged bases. Has a preference for oxidized pyrimidines, such as thymine glycol, 5,6-dihydrouracil and 5,6-dihydrothymine. Has AP (apurinic/apyrimidinic) lyase activity and introduces nicks in the DNA strand. Cleaves the DNA backbone by beta-delta elimination to generate a single-strand break at the site of the removed base with both 3'- and 5'-phosphates. This Escherichia coli O6:K15:H31 (strain 536 / UPEC) protein is Endonuclease 8.